A 497-amino-acid polypeptide reads, in one-letter code: Protein nucleotidyltransferase YdiU (497 aa).

Residues glycine 88, glycine 90, arginine 91, lysine 110, aspartate 122, glycine 123, arginine 173, and arginine 180 each contribute to the ATP site. Catalysis depends on aspartate 249, which acts as the Proton acceptor. Mg(2+) is bound by residues asparagine 250 and aspartate 259. Position 259 (aspartate 259) interacts with ATP. The interval 477 to 497 is disordered; that stretch reads FARYAEPPEGGGRGYRTFCGT.

The protein belongs to the SELO family. Requires Mg(2+) as cofactor. Mn(2+) serves as cofactor.

The catalysed reaction is L-seryl-[protein] + ATP = 3-O-(5'-adenylyl)-L-seryl-[protein] + diphosphate. It carries out the reaction L-threonyl-[protein] + ATP = 3-O-(5'-adenylyl)-L-threonyl-[protein] + diphosphate. It catalyses the reaction L-tyrosyl-[protein] + ATP = O-(5'-adenylyl)-L-tyrosyl-[protein] + diphosphate. The enzyme catalyses L-histidyl-[protein] + UTP = N(tele)-(5'-uridylyl)-L-histidyl-[protein] + diphosphate. The catalysed reaction is L-seryl-[protein] + UTP = O-(5'-uridylyl)-L-seryl-[protein] + diphosphate. It carries out the reaction L-tyrosyl-[protein] + UTP = O-(5'-uridylyl)-L-tyrosyl-[protein] + diphosphate. Functionally, nucleotidyltransferase involved in the post-translational modification of proteins. It can catalyze the addition of adenosine monophosphate (AMP) or uridine monophosphate (UMP) to a protein, resulting in modifications known as AMPylation and UMPylation. This chain is Protein nucleotidyltransferase YdiU, found in Methylorubrum extorquens (strain PA1) (Methylobacterium extorquens).